A 143-amino-acid chain; its full sequence is Calcitonin (143 aa).

A signal peptide spans 1–25 (MGFGKSSPFLAFSILVLCQAGSLQA). Residues 26–84 (TPLRSALETLPDPGALSEKEGRLLLAALVKAYVQRKTNELEQEEEQEETEDSSLDSSRA) constitute a propeptide that is removed on maturation. Ser-42 carries the phosphoserine modification. Positions 62–86 (TNELEQEEEQEETEDSSLDSSRAKR) are disordered. A compositionally biased stretch (acidic residues) spans 65-78 (LEQEEEQEETEDSS). Cys-87 and Cys-93 are oxidised to a cystine. The segment at 112 to 143 (GFGPETPGKKRDIANSLEKDLSSHFGVPTDAN) is disordered. Pro-118 carries the proline amide modification. The span at 118–133 (PGKKRDIANSLEKDLS) shows a compositional bias: basic and acidic residues. A propeptide spanning residues 122–143 (RDIANSLEKDLSSHFGVPTDAN) is cleaved from the precursor.

This sequence belongs to the calcitonin family.

It localises to the secreted. Calcitonin is a peptide hormone that causes a rapid but short-lived drop in the level of calcium and phosphate in blood by promoting the incorporation of those ions in the bones. Calcitonin function is mediated by the calcitonin receptor/CALCR and the CALCR-RAMP2 (AMYR2) receptor complex. This Ovis aries (Sheep) protein is Calcitonin (CALCA).